Here is a 306-residue protein sequence, read N- to C-terminus: Protoheme IX farnesyltransferase (306 aa).

The next 9 helical transmembrane spans lie at 35 to 55 (LIVF…PTWL), 61 to 81 (LIAC…NCLV), 106 to 126 (LTLA…YVWV), 129 to 149 (LTMW…TVIL), 157 to 177 (IVIG…AMTG), 183 to 203 (ALIL…ALAL), 224 to 244 (EFTR…CLMP), 245 to 265 (FIFK…SIGF), and 286 to 306 (RFSL…HYLI).

It belongs to the UbiA prenyltransferase family. Protoheme IX farnesyltransferase subfamily.

Its subcellular location is the cell inner membrane. It catalyses the reaction heme b + (2E,6E)-farnesyl diphosphate + H2O = Fe(II)-heme o + diphosphate. The protein operates within porphyrin-containing compound metabolism; heme O biosynthesis; heme O from protoheme: step 1/1. In terms of biological role, converts heme B (protoheme IX) to heme O by substitution of the vinyl group on carbon 2 of heme B porphyrin ring with a hydroxyethyl farnesyl side group. In Polaromonas naphthalenivorans (strain CJ2), this protein is Protoheme IX farnesyltransferase.